The chain runs to 513 residues: Prostaglandin E2 receptor EP4 subtype (513 aa).

The Extracellular segment spans residues 1–44 (MAEVGGTIPRSNRELQRCVLLTTTIMSIPGVNASFSSTPERLNS). The N-linked (GlcNAc...) asparagine glycan is linked to asparagine 32. Residues 45–68 (PVTIPAVMFIFGVVGNLVAIVVLC) traverse the membrane as a helical segment. The Cytoplasmic segment spans residues 69–80 (KSRKEQKETTFY). A helical membrane pass occupies residues 81–104 (TLVCGLAVTDLLGTLLVSPVTIAT). Over 105-121 (YMKGQWPGDQALCDYST) the chain is Extracellular. Cysteine 117 and cysteine 195 form a disulfide bridge. The chain crosses the membrane as a helical span at residues 122–140 (FILLFFGLSGLSIICAMSI). Residues 141–160 (ERYLAINHAYFYSHYVDKRL) lie on the Cytoplasmic side of the membrane. A helical membrane pass occupies residues 161–185 (AGLTLFAIYASNVLFCALPNMGLGR). The Extracellular segment spans residues 186–209 (SERQYPGTWCFIDWTTNVTAYAAF). The chain crosses the membrane as a helical span at residues 210–236 (SYMYAGFSSFLILATVLCNVLVCGALL). Residues 237–295 (RMHRQFMRRTSLGTEQHHAAAAAAVASVACRGHAGASPALQRLSDFRRRRSFRRIAGAE) are Cytoplasmic-facing. Residues 296 to 323 (IQMVILLIATSLVVLICSIPLVVRVFIN) traverse the membrane as a helical segment. Residues 324-340 (QLYQPNVVKDISRNPDL) lie on the Extracellular side of the membrane. The helical transmembrane segment at 341-360 (QAIRIASVNPILDPWIYILL) threads the bilayer. Topologically, residues 361–513 (RKTVLSKAIE…ETLKLSEKCI (153 aa)) are cytoplasmic. The segment at 383–403 (GRDSSAQHCSESRRTSSAMSG) is disordered. Over residues 384–403 (RDSSAQHCSESRRTSSAMSG) the composition is skewed to polar residues. A phosphoserine mark is found at serine 402, serine 405, and serine 407.

This sequence belongs to the G-protein coupled receptor 1 family. As to quaternary structure, interacts with FEM1A. Phosphorylation mediates agonist-mediated desensitization by promoting cytoplasmic retention. Abundant expression in ileum, thymus and mastocytoma P-815 cells. Also observed in lung, spleen, heart and uterus.

Its subcellular location is the cell membrane. Functionally, receptor for prostaglandin E2 (PGE2). The activity of this receptor is mediated by G(s) proteins that stimulate adenylate cyclase. Has a relaxing effect on smooth muscle. May play an important role in regulating renal hemodynamics, intestinal epithelial transport, adrenal aldosterone secretion, and uterine function. The polypeptide is Prostaglandin E2 receptor EP4 subtype (Ptger4) (Mus musculus (Mouse)).